Consider the following 134-residue polypeptide: MILKILIMIPDGIFWNNKAEEIILPTNTGQIGILKNHAPLITALDIGVILIRTDKKWVPFIIMGGFALIKQNKITILVNGAESAGTLKLVQSEAAFQEATNKLENAKSKKQYVDALFLFKCAKARYQAAKQLVS.

This sequence belongs to the ATPase epsilon chain family. As to quaternary structure, F-type ATPases have 2 components, CF(1) - the catalytic core - and CF(0) - the membrane proton channel. CF(1) has five subunits: alpha(3), beta(3), gamma(1), delta(1), epsilon(1). CF(0) has three main subunits: a, b and c.

It is found in the plastid membrane. In terms of biological role, produces ATP from ADP in the presence of a proton gradient across the membrane. The chain is ATP synthase epsilon chain, plastid from Prototheca wickerhamii.